Here is a 211-residue protein sequence, read N- to C-terminus: Small ribosomal subunit protein uS3 (211 aa).

The KH type-2 domain occupies 38-106 (LRNFLKKRLF…EIYLNIQEVR (69 aa)).

This sequence belongs to the universal ribosomal protein uS3 family. In terms of assembly, part of the 30S ribosomal subunit. Forms a tight complex with proteins S10 and S14.

In terms of biological role, binds the lower part of the 30S subunit head. Binds mRNA in the 70S ribosome, positioning it for translation. The polypeptide is Small ribosomal subunit protein uS3 (Geobacter metallireducens (strain ATCC 53774 / DSM 7210 / GS-15)).